Here is a 157-residue protein sequence, read N- to C-terminus: Small ribosomal subunit protein uS13 (157 aa).

This sequence belongs to the universal ribosomal protein uS13 family. In terms of assembly, part of the 30S ribosomal subunit. Forms a loose heterodimer with protein S19. Forms two bridges to the 50S subunit in the 70S ribosome.

Located at the top of the head of the 30S subunit, it contacts several helices of the 16S rRNA. In the 70S ribosome it contacts the 23S rRNA (bridge B1a) and protein L5 of the 50S subunit (bridge B1b), connecting the 2 subunits; these bridges are implicated in subunit movement. The chain is Small ribosomal subunit protein uS13 from Thermofilum pendens (strain DSM 2475 / Hrk 5).